Consider the following 327-residue polypeptide: Annexin A8 (327 aa).

Annexin repeat units follow at residues 21-92, 93-164, 177-249, and 253-324; these read FNPD…ALMY, PPYR…CLLQ, GLAL…TVVK, and NLHS…SLVG. Ca(2+)-binding residues include M266, G268, G270, and D310.

Belongs to the annexin family.

In terms of biological role, this protein is an anticoagulant protein that acts as an indirect inhibitor of the thromboplastin-specific complex, which is involved in the blood coagulation cascade. The chain is Annexin A8 (ANXA8) from Pan troglodytes (Chimpanzee).